A 248-amino-acid chain; its full sequence is MSDSDSDSDYELTLSANALAALEEFKREEQQHQEAFQKLYDETDEDFQKKKKEEGMKLFKEDWQLSQFWYSDDTAAILADAILEGADENTVIAIVSAPSVYAAIQKKPTNEIPTEHIYLFEFDKRFELLAGRDHFFFYDYNKPLDFSDEIKGKVDRLLIDPPFLNEDCQTKSSITAKCLLAPNDNSKTKKGVFKHRLISCTGERMSEVISKVYSDTRITTFLPEHSNGLSNEFRCYANFECSSWKFAS.

It belongs to the class I-like SAM-binding methyltransferase superfamily. EFM5 family.

It localises to the cytoplasm. S-adenosyl-L-methionine-dependent protein-lysine N-methyltransferase that trimethylates elongation factor 1-alpha (TEF1 and TEF2) at 'Lys-79'. Required for replication of Brome mosaic virus (BMV). In Saccharomyces cerevisiae (strain ATCC 204508 / S288c) (Baker's yeast), this protein is Protein-lysine N-methyltransferase EFM5.